The sequence spans 61 residues: Small ribosomal subunit protein uS14 (61 aa).

4 residues coordinate Zn(2+): Cys-24, Cys-27, Cys-40, and Cys-43.

This sequence belongs to the universal ribosomal protein uS14 family. Zinc-binding uS14 subfamily. In terms of assembly, part of the 30S ribosomal subunit. Contacts proteins S3 and S10. Requires Zn(2+) as cofactor.

Its function is as follows. Binds 16S rRNA, required for the assembly of 30S particles and may also be responsible for determining the conformation of the 16S rRNA at the A site. The chain is Small ribosomal subunit protein uS14 from Deinococcus geothermalis (strain DSM 11300 / CIP 105573 / AG-3a).